Reading from the N-terminus, the 343-residue chain is MNGSLNIRGLPKLTTSTSISVSSTSASSTLSTTTLSSNSIISSITTDTSGTSTSSRDVSSGQSTLNSISTTSSIIVPSITPPSAAKNPNVWHSEDSDGTVFIAVGSIIGGIFGGVLIWWMITSYLSHVKTKKAYHSDMEEQYMSHLNGGSPHKVGSYHDDKSKIENPFSSFYMDDLESSNKKKYSRVSLVSDNPFDEDLDYALDTTEQVRYNPIQDETNHYANKKDTLFISPTKEVLQQQRQRRESKLFDNPSELPSTPPSNFKTLMLKPERSASPERKSRSPIRQHRKNNSSVQLTPLKLDSGEDDFKKTPTKKKNVNNSNNNNKHKKTPSMYLDDMLENDN.

The segment at 45–65 (TTDTSGTSTSSRDVSSGQSTL) is disordered. A helical membrane pass occupies residues 101-121 (FIAVGSIIGGIFGGVLIWWMI). Residues 235–343 (EVLQQQRQRR…YLDDMLENDN (109 aa)) form a disordered region. Polar residues predominate over residues 254-264 (ELPSTPPSNFK). Over residues 269–280 (KPERSASPERKS) the composition is skewed to basic and acidic residues. The span at 281 to 290 (RSPIRQHRKN) shows a compositional bias: basic residues.

It belongs to the PRM5 family.

The protein localises to the vacuole membrane. The sequence is that of Vacuolar membrane protein Kpol_1003p17 from Vanderwaltozyma polyspora (strain ATCC 22028 / DSM 70294 / BCRC 21397 / CBS 2163 / NBRC 10782 / NRRL Y-8283 / UCD 57-17) (Kluyveromyces polysporus).